A 955-amino-acid polypeptide reads, in one-letter code: 26S proteasome non-ATPase regulatory subunit 1 (955 aa).

The disordered stretch occupies residues 279–313 (PGSTNTGTVPGSEKDSDAMEAEEKPGSTCVGKSAE). The segment covering 290–303 (SEKDSDAMEAEEKP) has biased composition (basic and acidic residues). PC repeat units lie at residues 403 to 436 (TATA…PGSA), 441 to 474 (GGLY…DIVR), 476 to 510 (GGSL…VTGE), 511 to 545 (AAGL…EKIL), 547 to 580 (GLAV…ILRR), 581 to 616 (SGMY…DVRR), 617 to 649 (AAVE…PHVR), 651 to 685 (GAAM…YVRQ), 686 to 726 (GALI…DVMA), and 729 to 761 (GAIL…PSVV). Disordered regions lie at residues 839–879 (AKKK…NFQL) and 932–955 (AHGP…YIDD). Composition is skewed to basic and acidic residues over residues 842-854 (KEKE…KEEE) and 861-874 (TEKK…KEPE). The span at 938-955 (EEEEQEPEPPEPFEYIDD) shows a compositional bias: acidic residues.

Belongs to the proteasome subunit S1 family. Component of the 19S proteasome regulatory particle complex. The 26S proteasome consists of a 20S core particle (CP) and two 19S regulatory subunits (RP). The regulatory particle is made of a lid composed of 9 subunits, a base containing 6 ATPases and few additional components including PSMD1. Interacts with ADRM1.

Component of the 26S proteasome, a multiprotein complex involved in the ATP-dependent degradation of ubiquitinated proteins. This complex plays a key role in the maintenance of protein homeostasis by removing misfolded or damaged proteins, which could impair cellular functions, and by removing proteins whose functions are no longer required. Therefore, the proteasome participates in numerous cellular processes, including cell cycle progression, apoptosis, or DNA damage repair. The protein is 26S proteasome non-ATPase regulatory subunit 1 (PSMD1) of Gallus gallus (Chicken).